The primary structure comprises 241 residues: uncharacterized protein (241 aa).

3 disordered regions span residues 19-59, 101-139, and 152-182; these read ERDR…QQLG, VRRP…ASRS, and RGCR…KPCS. The segment covering 34 to 48 has biased composition (gly residues); sequence ARGGRGLWTVGGGGS. Positions 49–58 are enriched in polar residues; that stretch reads PTETAESQQL. Positions 106–118 are enriched in pro residues; the sequence is PSVPSPLPKPPVP.

This is an uncharacterized protein from Homo sapiens (Human).